The following is a 429-amino-acid chain: Adenylosuccinate synthetase (429 aa).

GTP contacts are provided by residues 12-18 and 40-42; these read GDEGKGK and GHT. The active-site Proton acceptor is the aspartate 13. Residues aspartate 13 and glycine 40 each coordinate Mg(2+). IMP is bound by residues 13–16, 38–41, threonine 129, arginine 143, glutamine 223, threonine 238, and arginine 302; these read DEGK and NAGH. Residue histidine 41 is the Proton donor of the active site. 298–304 lines the substrate pocket; the sequence is VVTGRKR. Residues arginine 304, 330-332, and 412-414 contribute to the GTP site; these read KLD and STS.

It belongs to the adenylosuccinate synthetase family. Homodimer. Mg(2+) is required as a cofactor.

The protein resides in the cytoplasm. It catalyses the reaction IMP + L-aspartate + GTP = N(6)-(1,2-dicarboxyethyl)-AMP + GDP + phosphate + 2 H(+). It functions in the pathway purine metabolism; AMP biosynthesis via de novo pathway; AMP from IMP: step 1/2. In terms of biological role, plays an important role in the de novo pathway of purine nucleotide biosynthesis. Catalyzes the first committed step in the biosynthesis of AMP from IMP. In Bartonella henselae (strain ATCC 49882 / DSM 28221 / CCUG 30454 / Houston 1) (Rochalimaea henselae), this protein is Adenylosuccinate synthetase.